Consider the following 643-residue polypeptide: Phosphomethylpyrimidine synthase (643 aa).

Substrate-binding positions include Asn-248, Met-277, Tyr-306, His-342, 362–364 (SRG), 403–406 (DGLR), and Glu-442. His-446 is a binding site for Zn(2+). Residue Tyr-469 coordinates substrate. His-510 provides a ligand contact to Zn(2+). The [4Fe-4S] cluster site is built by Cys-590, Cys-593, and Cys-598.

Belongs to the ThiC family. Homodimer. The cofactor is [4Fe-4S] cluster.

The catalysed reaction is 5-amino-1-(5-phospho-beta-D-ribosyl)imidazole + S-adenosyl-L-methionine = 4-amino-2-methyl-5-(phosphooxymethyl)pyrimidine + CO + 5'-deoxyadenosine + formate + L-methionine + 3 H(+). Its pathway is cofactor biosynthesis; thiamine diphosphate biosynthesis. Functionally, catalyzes the synthesis of the hydroxymethylpyrimidine phosphate (HMP-P) moiety of thiamine from aminoimidazole ribotide (AIR) in a radical S-adenosyl-L-methionine (SAM)-dependent reaction. This chain is Phosphomethylpyrimidine synthase, found in Burkholderia cenocepacia (strain ATCC BAA-245 / DSM 16553 / LMG 16656 / NCTC 13227 / J2315 / CF5610) (Burkholderia cepacia (strain J2315)).